A 556-amino-acid polypeptide reads, in one-letter code: MSVSAFNRRWAAVILEALTRHGVRHICIAPGSRSTPLTLAAAENSAFIHHTHFDERGLGHLALGLAKVSKQPVAVIVTSGTAVANLYPALIEAGLTGEKLILLTADRPPELIDCGANQAIRQPGMFASHPTHSISLPRPTQDIPARWLVSTIDHALGTLHAGGVHINCPFAEPLYGEMDDTGISWQQRLGDWWQDDKPWLREAPRRESEKQRDWFFWRQKRGVVVAGRMSAEEGKKVALWAQTLGWPLIGDVLSQTGQPLPCADLWLGNAKATSELQQAQIVVQLGSSLTGKRLLQWQASCEPEEYWIVDDIEGRLDPAHHRGRRLIANIADWLELHPAEKRQPWCVEIPRLAEQAMQAVIARRDAFGEAQLAHRISDYLPEQGQLFVGNSLVVRLIDALSQLPAGYPVYSNRGASGIDGLLSTAAGVQRASGKPTLAIVGDLSALYDLNALALLRQVSAPLVLIVVNNNGGQIFSLLPTPKSERERFYLMPQNVHFEHAAAMFELKYHRPQNWQELETTLVDAWRTPTTTVIEMVVNDTDGAQTLQQLLAQVSHL.

This sequence belongs to the TPP enzyme family. MenD subfamily. As to quaternary structure, homodimer. Mg(2+) is required as a cofactor. Requires Mn(2+) as cofactor. Thiamine diphosphate serves as cofactor.

It carries out the reaction isochorismate + 2-oxoglutarate + H(+) = 5-enolpyruvoyl-6-hydroxy-2-succinyl-cyclohex-3-ene-1-carboxylate + CO2. Its pathway is quinol/quinone metabolism; 1,4-dihydroxy-2-naphthoate biosynthesis; 1,4-dihydroxy-2-naphthoate from chorismate: step 2/7. It functions in the pathway quinol/quinone metabolism; menaquinone biosynthesis. Catalyzes the thiamine diphosphate-dependent decarboxylation of 2-oxoglutarate and the subsequent addition of the resulting succinic semialdehyde-thiamine pyrophosphate anion to isochorismate to yield 2-succinyl-5-enolpyruvyl-6-hydroxy-3-cyclohexene-1-carboxylate (SEPHCHC). This chain is 2-succinyl-5-enolpyruvyl-6-hydroxy-3-cyclohexene-1-carboxylate synthase, found in Escherichia coli O45:K1 (strain S88 / ExPEC).